A 414-amino-acid chain; its full sequence is Putative cytochrome P450 126 (414 aa).

Residue Cys-363 participates in heme binding.

The protein belongs to the cytochrome P450 family. It depends on heme as a cofactor.

In Mycobacterium tuberculosis (strain CDC 1551 / Oshkosh), this protein is Putative cytochrome P450 126 (cyp126).